A 361-amino-acid chain; its full sequence is MYIKAIMLANYRNYNNLELNLSEGVNVFIGDNAQGKTNVLESIYYCAFAKSHRTSRDKDLINWKENEAYISLLVGKKRLDKRIDIKILRDGKKAIKVNSIKINKIGELFGTFNVVMFSPEDLKIIKESPGIRRKFLDMELCQISKKYYFNLVQYNKILNERNVILRSRDFNKDILEVYDLQLVECADYIVKERLEYIDKINYYGKFIHNEITSGKEDIVFKYDSGIKFKDNFKYAFLEKLRNNLLRDREQGITSVGPHRDDFNVLINNIDVKKFGSQGQQRTAVLTMKFSSLKIIKEITKEYPILLLDDVLSELDINRKRYVLSTLSDIQTIITCTGINDLEDYLDDKSKVFNVCNGEIVN.

Position 30-37 (30-37 (GDNAQGKT)) interacts with ATP.

The protein belongs to the RecF family.

It localises to the cytoplasm. The RecF protein is involved in DNA metabolism; it is required for DNA replication and normal SOS inducibility. RecF binds preferentially to single-stranded, linear DNA. It also seems to bind ATP. The polypeptide is DNA replication and repair protein RecF (Clostridium botulinum (strain Alaska E43 / Type E3)).